Reading from the N-terminus, the 587-residue chain is Bifunctional dihydrofolate reductase-thymidylate synthase (587 aa).

Positions 9–237 (DIYAICACCK…TTLDFIIYSK (229 aa)) constitute a DHFR domain. An NADP(+)-binding site is contributed by 36–42 (GIGNAGV). A substrate-binding site is contributed by Asp51. NADP(+) is bound by residues 108–110 (KKS) and 129–132 (LSRT). Residues Ile173, Tyr179, and Thr194 each coordinate substrate. Residue 174–181 (GGSSVYKE) participates in NADP(+) binding. The tract at residues 301–587 (NHPEYQYLNI…HDKINMDMAA (287 aa)) is thymidylate synthase. Arg324 lines the dUMP pocket. Cys469 is an active-site residue. DUMP is bound by residues His470, 488–492 (QRSCD), Asn500, and 530–532 (HVY).

The protein in the N-terminal section; belongs to the dihydrofolate reductase family. In the C-terminal section; belongs to the thymidylate synthase family. In terms of assembly, homodimer.

It catalyses the reaction (6S)-5,6,7,8-tetrahydrofolate + NADP(+) = 7,8-dihydrofolate + NADPH + H(+). The catalysed reaction is dUMP + (6R)-5,10-methylene-5,6,7,8-tetrahydrofolate = 7,8-dihydrofolate + dTMP. Its pathway is cofactor biosynthesis; tetrahydrofolate biosynthesis; 5,6,7,8-tetrahydrofolate from 7,8-dihydrofolate: step 1/1. In terms of biological role, bifunctional enzyme. Involved in de novo dTMP biosynthesis. Key enzyme in folate metabolism. Catalyzes an essential reaction for de novo glycine and purine synthesis, DNA precursor synthesis, and for the conversion of dUMP to dTMP. This is Bifunctional dihydrofolate reductase-thymidylate synthase from Plasmodium berghei (strain Anka).